A 240-amino-acid chain; its full sequence is UPF0173 metal-dependent hydrolase OE_2513F (240 aa).

This sequence belongs to the UPF0173 family.

This Halobacterium salinarum (strain ATCC 29341 / DSM 671 / R1) protein is UPF0173 metal-dependent hydrolase OE_2513F.